Here is a 588-residue protein sequence, read N- to C-terminus: MKLLKDLLVDRKEFEDWKNNLTWARDGTLYLTTFPDISIGQPKYAKDINCNSKNLFHVKEFPLEFENKLDFELAQQNGLLNSQPVCYPRVCKPSPIDDWMAVLSNNGNVSVFKDNKMLTNLDSKGNLSSRTYHCFEWNPIESSIVVGNEDGELQFFSIRKNSENTPEFYFESSIRLSDAGSKDWVTHIVWYEDVLVAALSNNSVFSMTVSASSHQPVSRMIQNASRRKITDLKIVDYKVVLTCPGYVHKIDLKNYSISSLKTGSLENFHIIPLNHEKESTILLMSNKTSYKVLLEDELHVTADNIIAPYLEKKFKKWSTIWNEFNNYETTLVIHGISLSPDGYSIAIVYDMERVAFKYKIASEQSFNIMFAPLYHTWTISERAVGLAWYQTYQIYNQSLPKLPENFSMNKKLLNGNYPISLDFQSYLNALMKSEEMRIIMFLNMTIDKPSILSFLEALYEYAINKKSELTNSFDLACVLSIAAILKREAPIYNGTLLMKNSFLEETFNLESFTADPETVTSTTNNTWKRCGVTLLPILTTHVKICPVSKQRVIDIKRDDLNDYGWFTRGLLERFNEISVYCGTTLEVM.

Residues 399-588 form a sufficient for SPT15-binding region; sequence LPKLPENFSM…VYCGTTLEVM (190 aa).

Heterodimer with TFC6. Component of the TFIIIC complex composed of TFC1, TFC3, TFC4, TFC6, TFC7 and TFC8. The subunits are organized in two globular domains, tauA and tauB, connected by a proteolysis-sensitive and flexible linker. Interacts with SPT15 and directly with TFC6.

It is found in the nucleus. TFIIIC mediates tRNA and 5S RNA gene activation by binding to intragenic promoter elements. Upstream of the transcription start site, TFIIIC assembles the initiation complex TFIIIB-TFIIIC-tDNA, which is sufficient for RNA polymerase III recruitment and function. Part of the tauB domain of TFIIIC that binds boxB DNA promoter sites of tRNA and similar genes. Plays a role in TFIIB assembly through its interaction with SPT15/TBP. Essential for cell viability. This Saccharomyces cerevisiae (strain ATCC 204508 / S288c) (Baker's yeast) protein is Transcription factor tau 60 kDa subunit (TFC8).